The primary structure comprises 339 residues: uncharacterized protein (339 aa).

28–35 serves as a coordination point for ATP; that stretch reads GPINSGKT.

It belongs to the archaeal ATPase family.

This is an uncharacterized protein from Pyrococcus abyssi (strain GE5 / Orsay).